The primary structure comprises 249 residues: 1-(5-phosphoribosyl)-5-[(5-phosphoribosylamino)methylideneamino] imidazole-4-carboxamide isomerase (249 aa).

Asp-11 acts as the Proton acceptor in catalysis. Asp-133 functions as the Proton donor in the catalytic mechanism.

This sequence belongs to the HisA/HisF family.

Its subcellular location is the cytoplasm. The catalysed reaction is 1-(5-phospho-beta-D-ribosyl)-5-[(5-phospho-beta-D-ribosylamino)methylideneamino]imidazole-4-carboxamide = 5-[(5-phospho-1-deoxy-D-ribulos-1-ylimino)methylamino]-1-(5-phospho-beta-D-ribosyl)imidazole-4-carboxamide. The protein operates within amino-acid biosynthesis; L-histidine biosynthesis; L-histidine from 5-phospho-alpha-D-ribose 1-diphosphate: step 4/9. This is 1-(5-phosphoribosyl)-5-[(5-phosphoribosylamino)methylideneamino] imidazole-4-carboxamide isomerase from Haemophilus influenzae (strain 86-028NP).